The following is a 382-amino-acid chain: Protein phosphatase 1A (382 aa).

The N-myristoyl glycine moiety is linked to residue glycine 2. Positions 23 to 291 (RYGLSSMQGW…DNMSVILICF (269 aa)) constitute a PPM-type phosphatase domain. Mn(2+) is bound by residues aspartate 60, glycine 61, aspartate 239, and aspartate 282. Phosphoserine is present on residues serine 375 and serine 377.

The protein belongs to the PP2C family. In terms of assembly, monomer. Interacts with SMAD2; the interaction dephosphorylates SMAD2 in its C-terminal SXS motif resulting in disruption of the SMAD2/SMAD4 complex, SMAD2 nuclear export and termination of the TGF-beta-mediated signaling. Interacts with SMAD2; the interaction dephosphorylates SMAD2 in its C-terminal SXS motif resulting in disruption of the SMAD2/SMAD4 complex, SMAD2 nuclear export and termination of the TGF-beta-mediated signaling. Interacts with the phosphorylated form of IKBKB/IKKB. Requires Mg(2+) as cofactor. Mn(2+) is required as a cofactor. Post-translationally, N-myristoylation is essential for the recognition of its substrates for dephosphorylation.

The protein resides in the nucleus. It localises to the cytoplasm. Its subcellular location is the cytosol. It is found in the membrane. It catalyses the reaction O-phospho-L-seryl-[protein] + H2O = L-seryl-[protein] + phosphate. The catalysed reaction is O-phospho-L-threonyl-[protein] + H2O = L-threonyl-[protein] + phosphate. In terms of biological role, enzyme with a broad specificity. Negatively regulates TGF-beta signaling through dephosphorylating SMAD2 and SMAD3, resulting in their dissociation from SMAD4, nuclear export of the SMADs and termination of the TGF-beta-mediated signaling. Dephosphorylates PRKAA1 and PRKAA2. Plays an important role in the termination of TNF-alpha-mediated NF-kappa-B activation through dephosphorylating and inactivating IKBKB/IKKB. This chain is Protein phosphatase 1A (PPM1A), found in Oryctolagus cuniculus (Rabbit).